The following is a 73-amino-acid chain: DNA-directed RNA polymerase subunit omega (73 aa).

Belongs to the RNA polymerase subunit omega family. As to quaternary structure, the RNAP catalytic core consists of 2 alpha, 1 beta, 1 beta' and 1 omega subunit. When a sigma factor is associated with the core the holoenzyme is formed, which can initiate transcription.

The enzyme catalyses RNA(n) + a ribonucleoside 5'-triphosphate = RNA(n+1) + diphosphate. Its function is as follows. Promotes RNA polymerase assembly. Latches the N- and C-terminal regions of the beta' subunit thereby facilitating its interaction with the beta and alpha subunits. In Lactobacillus delbrueckii subsp. bulgaricus (strain ATCC BAA-365 / Lb-18), this protein is DNA-directed RNA polymerase subunit omega.